The following is a 256-amino-acid chain: Vesicle-associated protein 1-1 (256 aa).

M1 is modified (N-acetylmethionine). The Cytoplasmic segment spans residues 1 to 232 (MSNIDLIGMS…RRESKKSQSG (232 aa)). S2 carries the post-translational modification N-acetylserine; in Vesicle-associated protein 1-1, N-terminally processed. The region spanning 22 to 142 (LLTVEPLDLQ…EETKLRVTYV (121 aa)) is the MSP domain. The disordered stretch occupies residues 142–169 (VAPPRPPSPVHEGSEEGSSPRASVSDNG). A Phosphoserine modification is found at S149. The span at 157-169 (EGSSPRASVSDNG) shows a compositional bias: polar residues. A coiled-coil region spans residues 187-232 (HQENTSEARALITKLTEEKQSAIQLNNRLQRELDQLRRESKKSQSG). The helical; Anchor for type IV membrane protein transmembrane segment at 233-253 (GIPFMYVLLVGLIGLILGYIM) threads the bilayer.

The protein belongs to the VAMP-associated protein (VAP) (TC 9.B.17) family. Homodimer or homooligomer. Interacts with the cowpea mosaic virus (CPMV) NTP-binding protein (NTB). Interacts with NET3C.

It localises to the endoplasmic reticulum membrane. The protein localises to the protein storage vacuole membrane. Its function is as follows. Part of a membrane-cytoskeletal adapter complex that forms a bridge between the endoplasmic reticulum and the plasma membrane. Associates with microtubules. The chain is Vesicle-associated protein 1-1 (PVA11) from Arabidopsis thaliana (Mouse-ear cress).